The sequence spans 273 residues: Polyamine aminopropyltransferase (273 aa).

In terms of domain architecture, PABS spans 5–238; it reads ENWFSERYSD…GFWSFTIASE (234 aa). Gln-34 lines the S-methyl-5'-thioadenosine pocket. His-65 and Asp-90 together coordinate spermidine. S-methyl-5'-thioadenosine is bound by residues Glu-109 and 140–141; that span reads DG. Catalysis depends on Asp-158, which acts as the Proton acceptor. Position 158-161 (158-161) interacts with spermidine; sequence DSTD. Pro-165 serves as a coordination point for S-methyl-5'-thioadenosine.

The protein belongs to the spermidine/spermine synthase family. Homodimer or homotetramer.

It localises to the cytoplasm. It catalyses the reaction S-adenosyl 3-(methylsulfanyl)propylamine + putrescine = S-methyl-5'-thioadenosine + spermidine + H(+). It functions in the pathway amine and polyamine biosynthesis; spermidine biosynthesis; spermidine from putrescine: step 1/1. Its function is as follows. Catalyzes the irreversible transfer of a propylamine group from the amino donor S-adenosylmethioninamine (decarboxy-AdoMet) to putrescine (1,4-diaminobutane) to yield spermidine. In Thermoplasma volcanium (strain ATCC 51530 / DSM 4299 / JCM 9571 / NBRC 15438 / GSS1), this protein is Polyamine aminopropyltransferase.